The sequence spans 330 residues: Low affinity immunoglobulin gamma Fc region receptor II (330 aa).

The first 29 residues, 1–29 (MESNWTVHVFSRTLCHMLLWTAVLNLAAG), serve as a signal peptide directing secretion. Residues 30–210 (THDLPKAVVK…QGPKSSRSLP (181 aa)) lie on the Extracellular side of the membrane. 2 consecutive Ig-like C2-type domains span residues 50-106 (EDTV…QTRL) and 131-189 (GETI…LGRT). 2 cysteine pairs are disulfide-bonded: C57–C99 and C138–C182. Residues N65, N92, N166, and N173 are each glycosylated (N-linked (GlcNAc...) asparagine). Residues 211 to 231 (VLTIVAAVTGIAVAAIVIILV) form a helical membrane-spanning segment. Topologically, residues 232 to 330 (SLVYLKKKQV…ETEHDYQNHI (99 aa)) are cytoplasmic. Residues 261 to 330 (VGEYRQPSGG…ETEHDYQNHI (70 aa)) form a disordered region. Y290 is modified (phosphotyrosine). The short motif at 307–312 (ITYSLL) is the ITIM motif element. Y309 carries the post-translational modification Phosphotyrosine; by SRC-type Tyr-kinases. A Phosphotyrosine modification is found at Y326.

As to quaternary structure, interacts with FGR. Interacts with LYN. Glycosylated. In terms of processing, when coaggregated to BCR, isoform IIB1 and isoform IIB1' become tyrosine phosphorylated and bind to the SH2 domains of the protein tyrosine phosphatase PTPC1. Phosphorylated by SRC-type Tyr-kinases such as LYN, BLK, FYN and SYK. As to expression, widely expressed by cells of hemopoietic origin. The isoforms are differentially expressed. Isoform IIB1 is preferentially expressed by cells of the lymphoid lineage, isoform IIB2 by cells of the myeloid lineage, and isoform IIB3 is released by macrophages and is present in the serum. Isoform IIB1' is expressed in myeloid and lymphoid cell lines, in normal spleen cells, and in resting or LPS-activated B-cells but is not detected in mesenteric lymph node cells.

The protein resides in the cell membrane. It localises to the cytoplasm. The protein localises to the cytoskeleton. Its subcellular location is the secreted. Receptor for the Fc region of complexed immunoglobulins gamma. Low affinity receptor. Involved in a variety of effector and regulatory functions such as phagocytosis of antigen-antibody complexes from the circulation and modulation of antibody production by B-cells. Isoform IIB1 and isoform IIB1' form caps but fail to mediate endocytosis or phagocytosis. Isoform IIB2 can mediate the endocytosis of soluble immune complexes via clathrin-coated pits. Isoform IIB1 and isoform IIB2 can down-regulate B-cell, T-cell, and mast cell activation when coaggregated to B-cell receptors for AG (BCR), T-cell receptors for AG (TCR), and Fc receptors, respectively. The chain is Low affinity immunoglobulin gamma Fc region receptor II (Fcgr2) from Mus musculus (Mouse).